The chain runs to 174 residues: Large ribosomal subunit protein uL10 (174 aa).

The protein belongs to the universal ribosomal protein uL10 family. Part of the ribosomal stalk of the 50S ribosomal subunit. The N-terminus interacts with L11 and the large rRNA to form the base of the stalk. The C-terminus forms an elongated spine to which L12 dimers bind in a sequential fashion forming a multimeric L10(L12)X complex.

Functionally, forms part of the ribosomal stalk, playing a central role in the interaction of the ribosome with GTP-bound translation factors. In Anaeromyxobacter dehalogenans (strain 2CP-1 / ATCC BAA-258), this protein is Large ribosomal subunit protein uL10.